The chain runs to 511 residues: Coatomer subunit delta (511 aa).

Residues 168–177 are compositionally biased toward basic and acidic residues; the sequence is QARRDAERQG. Residues 168–188 form a disordered region; the sequence is QARRDAERQGKKAPGFGGFGS. Ser223 carries the phosphoserine modification. N6-acetyllysine is present on residues Lys233 and Lys241. At Ser244 the chain carries Phosphoserine. The MHD domain maps to 271–511; sequence MESVHMKIEE…TFLVDKYEIL (241 aa). 2 positions are modified to N6-acetyllysine: Lys309 and Lys351. Ser493 carries the post-translational modification Phosphoserine.

It belongs to the adaptor complexes medium subunit family. Delta-COP subfamily. In terms of assembly, oligomeric complex that consists of at least the alpha, beta, beta', gamma, delta, epsilon and zeta subunits. As to expression, ubiquitously expressed.

The protein localises to the cytoplasm. It is found in the golgi apparatus membrane. It localises to the cytoplasmic vesicle. Its subcellular location is the COPI-coated vesicle membrane. Its function is as follows. Component of the coatomer, a cytosolic protein complex that binds to dilysine motifs and reversibly associates with Golgi non-clathrin-coated vesicles, which further mediate biosynthetic protein transport from the ER, via the Golgi up to the trans Golgi network. The coatomer complex is required for budding from Golgi membranes, and is essential for the retrograde Golgi-to-ER transport of dilysine-tagged proteins. In mammals, the coatomer can only be recruited by membranes associated to ADP-ribosylation factors (ARFs), which are small GTP-binding proteins; the complex also influences the Golgi structural integrity, as well as the processing, activity, and endocytic recycling of LDL receptors. The chain is Coatomer subunit delta (ARCN1) from Homo sapiens (Human).